A 36-amino-acid polypeptide reads, in one-letter code: Thrombin (36 aa).

The Peptidase S1 domain occupies 19–36 (IVKGIDAEVASAPMQVML).

It belongs to the peptidase S1 family. Forms a heterodimer with SERPINA5. Post-translationally, the gamma-carboxyglutamyl residues, which bind calcium ions, result from the carboxylation of glutamyl residues by a microsomal enzyme, the vitamin K-dependent carboxylase. The modified residues are necessary for the calcium-dependent interaction with a negatively charged phospholipid surface, which is essential for the conversion of prothrombin to thrombin. N-glycosylated. In terms of tissue distribution, expressed by the liver and secreted in plasma.

It is found in the secreted. The enzyme catalyses Selective cleavage of Arg-|-Gly bonds in fibrinogen to form fibrin and release fibrinopeptides A and B.. With respect to regulation, inhibited by SERPINA5. Its function is as follows. Thrombin, which cleaves bonds after Arg and Lys, converts fibrinogen to fibrin and activates factors V, VII, VIII, XIII, and, in complex with thrombomodulin, protein C. Functions in blood homeostasis, inflammation and wound healing. The chain is Thrombin from Salmo salar (Atlantic salmon).